The following is a 373-amino-acid chain: Alanine dehydrogenase (373 aa).

Arg-15 and Lys-75 together coordinate substrate. His-96 functions as the Proton donor/acceptor in the catalytic mechanism. NAD(+) is bound by residues Ser-134, Ile-178 to Val-179, Asp-198, Ser-220, Val-239 to Leu-240, Val-267 to Asp-270, Arg-280, and Val-299 to Ile-302. The active-site Proton donor/acceptor is the Asp-270.

This sequence belongs to the AlaDH/PNT family. As to quaternary structure, homohexamer. Trimer of dimer.

The protein localises to the cytoplasm. The catalysed reaction is L-alanine + NAD(+) + H2O = pyruvate + NH4(+) + NADH + H(+). Its pathway is amino-acid degradation; L-alanine degradation via dehydrogenase pathway; NH(3) and pyruvate from L-alanine: step 1/1. Catalyzes the reversible reductive amination of pyruvate to L-alanine. This enzyme is a key factor in the assimilation of L-alanine as an energy source through the tricarboxylic acid cycle. This chain is Alanine dehydrogenase, found in Methanococcus maripaludis (strain DSM 14266 / JCM 13030 / NBRC 101832 / S2 / LL).